We begin with the raw amino-acid sequence, 205 residues long: Adenylyl-sulfate kinase (205 aa).

31–38 contacts ATP; it reads GLSGAGKS. Ser-105 serves as the catalytic Phosphoserine intermediate.

This sequence belongs to the APS kinase family.

It carries out the reaction adenosine 5'-phosphosulfate + ATP = 3'-phosphoadenylyl sulfate + ADP + H(+). It participates in sulfur metabolism; hydrogen sulfide biosynthesis; sulfite from sulfate: step 2/3. Functionally, catalyzes the synthesis of activated sulfate. The chain is Adenylyl-sulfate kinase from Shewanella oneidensis (strain ATCC 700550 / JCM 31522 / CIP 106686 / LMG 19005 / NCIMB 14063 / MR-1).